A 235-amino-acid polypeptide reads, in one-letter code: 7-cyano-7-deazaguanine synthase (235 aa).

An ATP-binding site is contributed by 7-17 (CSGGLDSVSLA). The Zn(2+) site is built by C185, C193, C196, and C199.

The protein belongs to the QueC family. Zn(2+) serves as cofactor.

It carries out the reaction 7-carboxy-7-deazaguanine + NH4(+) + ATP = 7-cyano-7-deazaguanine + ADP + phosphate + H2O + H(+). It functions in the pathway purine metabolism; 7-cyano-7-deazaguanine biosynthesis. Functionally, catalyzes the ATP-dependent conversion of 7-carboxy-7-deazaguanine (CDG) to 7-cyano-7-deazaguanine (preQ(0)). The sequence is that of 7-cyano-7-deazaguanine synthase from Allorhizobium ampelinum (strain ATCC BAA-846 / DSM 112012 / S4) (Agrobacterium vitis (strain S4)).